A 314-amino-acid polypeptide reads, in one-letter code: MHAYLHCLSHSPLVGYVDPAQEVLDEVNGVIASARERIAAFSPELVVLFAPDHYNGFFYDVMPPFCLGVGATAIGDFGSAAGELPVPVELAEACAHAVMKSGIDLAVSYCMQVDHGFAQPLEFLLGGLDKVPVLPVFINGVATPLPGFQRTRMLGEAIGRFTSTLNKRVLFLGSGGLSHQPPVPELAKADAHMRDRLLGSGKDLPASERELRQQRVISAAEKFVEDQRTLHPLNPIWDNQFMTLLEQGRIQELDAVSNEELSAIAGKSTHEIKTWVAAFAAISAFGNWRSEGRYYRPIPEWIAGFGSLSARTEN.

His115 serves as the catalytic Proton donor. The active-site Proton acceptor is His179.

Belongs to the LigB/MhpB extradiol dioxygenase family. In terms of assembly, homotetramer. The cofactor is Fe(2+).

It catalyses the reaction 3-(2,3-dihydroxyphenyl)propanoate + O2 = (2Z,4E)-2-hydroxy-6-oxonona-2,4-dienedioate + H(+). The catalysed reaction is (2E)-3-(2,3-dihydroxyphenyl)prop-2-enoate + O2 = (2Z,4E,7E)-2-hydroxy-6-oxonona-2,4,7-trienedioate + H(+). Its pathway is aromatic compound metabolism; 3-phenylpropanoate degradation. Functionally, catalyzes the non-heme iron(II)-dependent oxidative cleavage of 2,3-dihydroxyphenylpropionic acid and 2,3-dihydroxicinnamic acid into 2-hydroxy-6-ketononadienedioate and 2-hydroxy-6-ketononatrienedioate, respectively. The chain is 2,3-dihydroxyphenylpropionate/2,3-dihydroxicinnamic acid 1,2-dioxygenase from Escherichia coli O157:H7.